Here is a 185-residue protein sequence, read N- to C-terminus: MKMIVGLGNIEKKYEGTRHNVGFMVVERFVEEHGGNFNKEKFDSLISELFINGEKIIVIKPTTYMNESGRAVRPLMDYFNLTTEDIIICHDDMDLEIGHLRLRQKGSAGGHNGIKSIISHVGTEKFKRVRVGIDHPQKMSVVDWVLSRFTKEQEAKLDDGLTRAVAALDDWIENDDFMNTMNRFN.

Tyrosine 14 lines the tRNA pocket. Histidine 19 serves as the catalytic Proton acceptor. Tyrosine 64, asparagine 66, and asparagine 112 together coordinate tRNA.

The protein belongs to the PTH family. In terms of assembly, monomer.

It localises to the cytoplasm. The enzyme catalyses an N-acyl-L-alpha-aminoacyl-tRNA + H2O = an N-acyl-L-amino acid + a tRNA + H(+). In terms of biological role, hydrolyzes ribosome-free peptidyl-tRNAs (with 1 or more amino acids incorporated), which drop off the ribosome during protein synthesis, or as a result of ribosome stalling. Catalyzes the release of premature peptidyl moieties from peptidyl-tRNA molecules trapped in stalled 50S ribosomal subunits, and thus maintains levels of free tRNAs and 50S ribosomes. The sequence is that of Peptidyl-tRNA hydrolase from Ligilactobacillus salivarius (strain UCC118) (Lactobacillus salivarius).